The primary structure comprises 393 residues: S-adenosylmethionine synthase 1 (393 aa).

Residue Glu-9 coordinates Mg(2+). His-15 provides a ligand contact to ATP. Residue Glu-43 coordinates K(+). Positions 56 and 99 each coordinate L-methionine. Residues 167-169 (DGK), 235-238 (SGRF), Asp-246, 252-253 (RK), Ala-269, Lys-273, and Lys-277 each bind ATP. Asp-246 is an L-methionine binding site. Lys-277 is an L-methionine binding site.

Belongs to the AdoMet synthase family. As to quaternary structure, homotetramer. Requires Mn(2+) as cofactor. It depends on Mg(2+) as a cofactor. The cofactor is Co(2+). K(+) is required as a cofactor.

Its subcellular location is the cytoplasm. It catalyses the reaction L-methionine + ATP + H2O = S-adenosyl-L-methionine + phosphate + diphosphate. It functions in the pathway amino-acid biosynthesis; S-adenosyl-L-methionine biosynthesis; S-adenosyl-L-methionine from L-methionine: step 1/1. Its function is as follows. Catalyzes the formation of S-adenosylmethionine from methionine and ATP. The reaction comprises two steps that are both catalyzed by the same enzyme: formation of S-adenosylmethionine (AdoMet) and triphosphate, and subsequent hydrolysis of the triphosphate. This is S-adenosylmethionine synthase 1 (SAMS1) from Brassica juncea (Indian mustard).